Reading from the N-terminus, the 123-residue chain is Small ribosomal subunit protein uS12 (123 aa).

The disordered stretch occupies residues 1–24 (MPTINQLVRKGRTPQKVKSKVPAM). Basic residues predominate over residues 9–19 (RKGRTPQKVKS). A 3-methylthioaspartic acid modification is found at aspartate 89.

The protein belongs to the universal ribosomal protein uS12 family. Part of the 30S ribosomal subunit. Contacts proteins S8 and S17. May interact with IF1 in the 30S initiation complex.

Its function is as follows. With S4 and S5 plays an important role in translational accuracy. Interacts with and stabilizes bases of the 16S rRNA that are involved in tRNA selection in the A site and with the mRNA backbone. Located at the interface of the 30S and 50S subunits, it traverses the body of the 30S subunit contacting proteins on the other side and probably holding the rRNA structure together. The combined cluster of proteins S8, S12 and S17 appears to hold together the shoulder and platform of the 30S subunit. This is Small ribosomal subunit protein uS12 from Sphingopyxis alaskensis (strain DSM 13593 / LMG 18877 / RB2256) (Sphingomonas alaskensis).